We begin with the raw amino-acid sequence, 398 residues long: Acetate kinase (398 aa).

Mg(2+) is bound at residue asparagine 9. Lysine 16 is an ATP binding site. Arginine 89 contributes to the substrate binding site. The active-site Proton donor/acceptor is aspartate 146. Residues 206-210, 281-283, and 329-333 each bind ATP; these read HLGNG, DCR, and GIGEN. Position 384 (glutamate 384) interacts with Mg(2+).

Belongs to the acetokinase family. In terms of assembly, homodimer. It depends on Mg(2+) as a cofactor. Requires Mn(2+) as cofactor.

The protein localises to the cytoplasm. It catalyses the reaction acetate + ATP = acetyl phosphate + ADP. The protein operates within metabolic intermediate biosynthesis; acetyl-CoA biosynthesis; acetyl-CoA from acetate: step 1/2. Its function is as follows. Catalyzes the formation of acetyl phosphate from acetate and ATP. Can also catalyze the reverse reaction. The sequence is that of Acetate kinase from Vibrio campbellii (strain ATCC BAA-1116).